The chain runs to 96 residues: Co-chaperonin GroES (96 aa).

It belongs to the GroES chaperonin family. As to quaternary structure, heptamer of 7 subunits arranged in a ring. Interacts with the chaperonin GroEL.

The protein resides in the cytoplasm. Together with the chaperonin GroEL, plays an essential role in assisting protein folding. The GroEL-GroES system forms a nano-cage that allows encapsulation of the non-native substrate proteins and provides a physical environment optimized to promote and accelerate protein folding. GroES binds to the apical surface of the GroEL ring, thereby capping the opening of the GroEL channel. This Nitrosococcus oceani (strain ATCC 19707 / BCRC 17464 / JCM 30415 / NCIMB 11848 / C-107) protein is Co-chaperonin GroES.